We begin with the raw amino-acid sequence, 1064 residues long: MASESETLNPSARIMTFYPTMEEFRNFSRYIAYIESQGAHRAGLAKVVPPKEWKPRASYDDIDDLVIPAPIQQLVTGQSGLFTQYNIQKKAMTVREFRKIANSDKYCTPRYSEFEELERKYWKNLTFNPPIYGADVNGTLYEKHVDEWNIGRLRTILDLVEKESGITIEGVNTPYLYFGMWKTSFAWHTEDMDLYSINYLHFGEPKSWYSVPPEHGKRLERLAKGFFPGSAQSCEAFLRHKMTLISPLMLKKYGIPFDKVTQEAGEFMITFPYGYHAGFNHGFNCAESTNFATRRWIEYGKQAVLCSCRKDMVKISMDVFVRKFQPERYKLWKAGKDNTVIDHTLPTPEAAEFLKESELPPRAGNEEECPEDDMEGVEDGEEGDLKTSLAKHRIGTKRHRVCLEIPQEVSQSELFPKEDLSSEQYEMTECPAALAPVRPTHSSVRQVEDGLTFPDYSDSTEVKFEELKNVKLEEEDEEEEQEAAALDLSVNPASVGGRLVFSGSKKKSSSSLGSGSSRDSVSSDSETSEPLSCRAQGQTGVLTVHSYAKGDGRVTVGEPCMRKKGSTARSFSERELAEVADEYMFSLEENKKSKGRRQPLSKLPRHHPLVLQECVSDDETSEQLTPEEEAEETEAWAKPLSQLWQNRPPNFEAEKEFNETMAQQAPHCAVCMIFQTYHQVEFGGFNQNCGNASDLAPQKQRTKPLIPEMCFTSTGCGTDINLSTPYLEEDGTSILVSCKKCSVRVHASCYGVPPAKASEDWMCSRCSANALEEDCCLCSLRGGALQRANDDRWVHVSCAVAILEARFVNIAERSPVDVSKIPLPRFKLKCIFCKKRRKRTAGCCVQCSHGRCPTAFHVSCAQAAGVMMQPDDWPFVVFITCFRHKIPNLERAKGALQSITAGQKVISKHKNGRFYQCEVVRLTTETFYEVNFDDGSFSDNLYPEDIVSQDCLQFGPPAEGEVVQVRWTDGQVYGAKFVASHPIQMYQVEFEDGSQLVVKRDDVYTLDEELPKRVKSRLSVASDMRFNEIFTEKEVKQEKKRQRVINSRYREDYIESALYRAIME.

Position 2 is an N-acetylalanine (Ala2). The JmjN domain maps to 14-56 (IMTFYPTMEEFRNFSRYIAYIESQGAHRAGLAKVVPPKEWKPR). Tyr132 provides a ligand contact to 2-oxoglutarate. Residues 142–308 (EKHVDEWNIG…YGKQAVLCSC (167 aa)) form the JmjC domain. Residues His188 and Glu190 each contribute to the Fe cation site. The 2-oxoglutarate site is built by Asn198 and Lys206. Zn(2+)-binding residues include Cys234 and His240. 2-oxoglutarate is bound at residue Lys241. His276 is a Fe cation binding site. Positions 306 and 308 each coordinate Zn(2+). Disordered stretches follow at residues 358–384 (ELPP…EEGD), 501–537 (FSGS…RAQG), and 616–642 (SDDE…PLSQ). The segment covering 366–382 (EEECPEDDMEGVEDGEE) has biased composition (acidic residues). Residues 509 to 532 (SSSLGSGSSRDSVSSDSETSEPLS) show a composition bias toward low complexity. A Phosphoserine modification is found at Ser523. Residues 597–638 (RQPLSKLPRHHPLVLQECVSDDETSEQLTPEEEAEETEAWAK) are interaction with NCOR1. Residues 616 to 634 (SDDETSEQLTPEEEAEETE) are compositionally biased toward acidic residues. A PHD-type 1 zinc finger spans residues 709–767 (MCFTSTGCGTDINLSTPYLEEDGTSILVSCKKCSVRVHASCYGVPPAKASEDWMCSRCS). The C2HC pre-PHD-type zinc finger occupies 772-805 (EEDCCLCSLRGGALQRANDDRWVHVSCAVAILEA). The PHD-type 2 zinc-finger motif lies at 828-885 (LKCIFCKKRRKRTAGCCVQCSHGRCPTAFHVSCAQAAGVMMQPDDWPFVVFITCFRHK). 2 consecutive Tudor domains span residues 897–954 (QSIT…CLQF) and 955–1011 (GPPA…EELP).

This sequence belongs to the JHDM3 histone demethylase family. As to quaternary structure, interacts with histone deacetylase proteins HDAC1, HDAC2 and HDAC3. Interacts with RB and NCOR1. Interacts with VRK1. The cofactor is Fe(2+). Ubiquitinated by RNF8 and RNF168, leading to its degradation. Degradation promotes accessibility of H4K20me2 mark for DNA repair protein TP53BP1, which is then recruited. Also ubiquitinated by the SCF(FBXO22) complex; leading to proteasomal degradation.

The protein resides in the nucleus. It carries out the reaction N(6),N(6),N(6)-trimethyl-L-lysyl(9)-[histone H3] + 2 2-oxoglutarate + 2 O2 = N(6)-methyl-L-lysyl(9)-[histone H3] + 2 formaldehyde + 2 succinate + 2 CO2. It catalyses the reaction N(6),N(6),N(6)-trimethyl-L-lysyl(36)-[histone H3] + 2 2-oxoglutarate + 2 O2 = N(6)-methyl-L-lysyl(36)-[histone H3] + 2 formaldehyde + 2 succinate + 2 CO2. Functionally, histone demethylase that specifically demethylates 'Lys-9' and 'Lys-36' residues of histone H3, thereby playing a central role in histone code. Does not demethylate histone H3 'Lys-4', H3 'Lys-27' nor H4 'Lys-20'. Demethylates trimethylated H3 'Lys-9' and H3 'Lys-36' residue, while it has no activity on mono- and dimethylated residues. Demethylation of Lys residue generates formaldehyde and succinate. Participates in transcriptional repression of ASCL2 and E2F-responsive promoters via the recruitment of histone deacetylases and NCOR1, respectively. This Pongo abelii (Sumatran orangutan) protein is Lysine-specific demethylase 4A (KDM4A).